Consider the following 724-residue polypeptide: Disks large homolog 4 (724 aa).

Residues Cys3 and Cys5 are each lipidated (S-palmitoyl cysteine). Positions Gln15 to Ser35 are disordered. PDZ domains lie at Glu65–Arg151 and Glu160–Pro246. 2 positions are modified to phosphoserine: Ser73 and Ser142. Residue Tyr240 is modified to Phosphotyrosine. Ser295 bears the Phosphoserine mark. One can recognise a PDZ 3 domain in the interval Arg313–Lys393. Ser415 and Ser418 each carry phosphoserine. At Thr420 the chain carries Phosphothreonine. Phosphoserine is present on residues Ser422, Ser425, Ser449, and Ser480. One can recognise an SH3 domain in the interval Lys428–Glu498. The Guanylate kinase-like domain maps to Ala534 to Glu709. A Phosphotyrosine modification is found at Tyr580. 2 positions are modified to phosphoserine: Ser606 and Ser654. Residue Tyr715 is modified to Phosphotyrosine.

The protein belongs to the MAGUK family. In terms of assembly, interacts through its PDZ domains with ANO2 and NETO1. Interacts through its first two PDZ domains with GRIN2A, GRIN2B, GRIN2C, GRIN2D. Interacts with ASIC3. Interacts with SEMA4C. Interacts with CXADR. Interacts with KCND2. Interacts with SYNGAP1. Interacts with LRRC4 and LRRC4B. Interacts with ERBB4. Interacts with KCNA1, KCNA2, KCNA3 and KCNA4. Interacts through its first PDZ domain with GRIK2, KCNA4 and CRIPT. Interacts through its second PDZ domain with the PDZ domain of NOS1 or the C-terminus of CAPON. Interacts through its third PDZ domain with NLGN1 and CRIPT, and probably with NLGN2 and NLGN3. Interacts through its guanylate kinase-like domain with KIF13B. Interacts through its guanylate kinase-like domain with DLGAP1/GKAP, DLGAP2, DLGAP3, DLGAP4, MAP1A, BEGAIN and SIPA1L1. Isoform 2 interacts through an L27 domain with HGS/HRS and the first L27 domain of CASK. Interacts with ADR1B and ANKS1B. May interact with HTR2A. Interacts with ADAM22. Interacts with KLHL17 and LGI1. Interacts with FRMPD4 (via C-terminus). Interacts with LRFN1, LRFN2 and LRFN4. Interacts (via N-terminal tandem pair of PDZ domains) with GPER1 (via C-terminus tail motif); the interaction is direct and induces the increase of GPER1 protein levels residing at the plasma membrane surface in a estradiol-independent manner. Interacts (via N-terminus tandem pair of PDZ domains) with NOS1 (via N-terminal domain). Interacts with SHANK3. Interacts with KCNJ4. Interacts with GPR85. Interacts with CACNG2 and MPP2 (via the SH3-Guanylate kinase-like sub-module). Interacts with ADGRB1. Found in a complex with PRR7 and GRIN1. Interacts (via PDZ3 domain and to lesser degree via PDZ2 domain) with PRR7. Component of the postsynaptic hippocampal AMPA-type glutamate receptor (AMPAR) complex, at least composed of pore forming AMPAR subunits GRIA1, GRIA2 and GRIA3 and AMPAR auxiliary proteins SHISA6 and SHISA7. Interacts (via its first two PDZ domains) with SHISA6 and SHISA7 (via PDZ-binding motif); the interaction is direct. Interacts with RPH3A and GRIN2A; this ternary complex regulates NMDA receptor composition at postsynaptic membranes. Interacts with ABR and BCR. Interacts with DGKI (via PDZ-binding motif); controls the localization of DGKI to the synapse. Interacts with C9orf72, SMCR8 and RAB39B. Interacts with ZDHHC5. Interacts with PTEN (via PDZ domain-binding motif); the interaction is induced by NMDA and is required for PTEN location at postsynaptic density. Found in a complex with GRIA1, GRIA2, GRIA3, GRIA4, CACNG8 and CNIH2. Interacts with FAM81A; the interaction facilitates condensate formation via liquid-liquid phase separation. Interacts with ADGRL3. Interacts with SORCS3. Palmitoylated. Palmitoylation is required for targeting to postsynaptic density, plasma membrane and synapses. Palmitoylation by ZDHHC2 occurs when the synaptic activity decreases and induces DLG4 synaptic clustering. Palmitoylation by ZDHHC15 regulates trafficking to the postsynaptic density and function in synaptogenesis. Palmitoylation may play a role in glutamate receptor GRIA1 synapse clustering. Depalmitoylated by ABHD17A and ABHD17B and to a lesser extent by ABHD17C, ABHD12, ABHD13, LYPLA1 and LYPLA2. Undergoes rapid synaptic palmitoylation/depalmitoylation cycles during neuronal development which slow down in mature neurons. Post-translationally, ubiquitinated by MDM2 in response to NMDA receptor activation, leading to proteasome-mediated degradation of DLG4 which is required for AMPA receptor endocytosis. Brain.

It is found in the cell membrane. It localises to the postsynaptic density. The protein resides in the synapse. The protein localises to the cytoplasm. Its subcellular location is the cell projection. It is found in the axon. It localises to the dendritic spine. The protein resides in the dendrite. The protein localises to the presynapse. Functionally, postsynaptic scaffolding protein that plays a critical role in synaptogenesis and synaptic plasticity by providing a platform for the postsynaptic clustering of crucial synaptic proteins. Interacts with the cytoplasmic tail of NMDA receptor subunits and shaker-type potassium channels. Required for synaptic plasticity associated with NMDA receptor signaling. Overexpression or depletion of DLG4 changes the ratio of excitatory to inhibitory synapses in hippocampal neurons. May reduce the amplitude of ASIC3 acid-evoked currents by retaining the channel intracellularly. May regulate the intracellular trafficking of ADR1B. Also regulates AMPA-type glutamate receptor (AMPAR) immobilization at postsynaptic density keeping the channels in an activated state in the presence of glutamate and preventing synaptic depression. Under basal conditions, cooperates with FYN to stabilize palmitoyltransferase ZDHHC5 at the synaptic membrane through FYN-mediated phosphorylation of ZDHHC5 and its subsequent inhibition of association with endocytic proteins. The protein is Disks large homolog 4 of Homo sapiens (Human).